We begin with the raw amino-acid sequence, 695 residues long: UvrABC system protein C (695 aa).

Basic and acidic residues predominate over residues 1–10 (MNQDPAETRD). A disordered region spans residues 1–53 (MNQDPAETRDTAAPPPADTTSPSPVSPELEPRSAPGAQDIDAASASLTVDEDD). A compositionally biased stretch (low complexity) spans 18–27 (DTTSPSPVSP). The region spanning 88–166 (TSPGVYRMLN…IKQLRPRFNV (79 aa)) is the GIY-YIG domain. One can recognise a UVR domain in the interval 276 to 311 (RAVKQELAVEMEKASNELEFETAALYRDRLAALSAI).

The protein belongs to the UvrC family. As to quaternary structure, interacts with UvrB in an incision complex.

It is found in the cytoplasm. Its function is as follows. The UvrABC repair system catalyzes the recognition and processing of DNA lesions. UvrC both incises the 5' and 3' sides of the lesion. The N-terminal half is responsible for the 3' incision and the C-terminal half is responsible for the 5' incision. This is UvrABC system protein C from Rhodopseudomonas palustris (strain BisB5).